Here is a 761-residue protein sequence, read N- to C-terminus: Subtilisin-like protease SBT3 (761 aa).

Positions 1-22 are cleaved as a signal peptide; sequence MELLHLLLFSWALSAHLFLALA. Residues 23-112 constitute a propeptide that is removed on maturation; that stretch reads QRSTYIVHLD…AYKDRTVEPH (90 aa). Positions 26–110 constitute an Inhibitor I9 domain; the sequence is TYIVHLDKSL…ISAYKDRTVE (85 aa). Residues 116-606 enclose the Peptidase S8 domain; the sequence is TSDFLKLNPS…AGHVDPNRAL (491 aa). D144 serves as the catalytic Charge relay system. C170 and C181 are joined by a disulfide. N177 and N203 each carry an N-linked (GlcNAc...) (complex) asparagine; alternate glycan. N177 and N203 each carry an N-linked (GlcNAc...) (paucimannose) asparagine; alternate glycan. The active-site Charge relay system is H215. N376 is a glycosylation site (N-linked (GlcNAc...) (paucimannose) asparagine; partial). An intrachain disulfide couples C382 to C401. Catalysis depends on S538, which acts as the Charge relay system. A disordered region spans residues 574–598; sequence LDNTRKPIKDSDNNKAATPLDMGAG. Over residues 575 to 586 the composition is skewed to basic and acidic residues; that stretch reads DNTRKPIKDSDN. A disulfide bond links C624 and C645. Residues N697 and N745 are each glycosylated (N-linked (GlcNAc...) (complex) asparagine; alternate). 2 N-linked (GlcNAc...) (paucimannose) asparagine; alternate glycosylation sites follow: N697 and N745. Residues 756–761 are necessary for prodomain cleavage and secretion; the sequence is PIIEVW.

This sequence belongs to the peptidase S8 family. Homodimer. In terms of processing, propeptide is internally cleaved at Asn-38 and Asp-52 in a pH-dependent manner leading to the dissociation of the propeptide from the catalytic domain and resulting in the release of the active subtilase. Cleavage occurs at pH 5.7 and to a stronger extent at pH 5.2. Expressed in flowers, cotyledons and leaves with the highest expression in roots.

It localises to the secreted. With respect to regulation, inhibited by 1 mM 4-(2-aminoethyl)-benzenesulfonyl fluoride (AEBSF), a general inhibitor of serine proteinases, but not by the more selective serine protease inhibitors N-alpha-tosyl-L-lysinyl-chloromethylketone (TLCK), N-tosyl-L-phenylalaninyl-chloromethylketone (TPCK), leupeptin, aprotinin or benzamidine. Its proteolytic activity is autoinhibited by the non-covalent binding of the propeptide to the catalytic domain. No effect on activity by the addition of CaCl(2) or calcium chelators. Serine protease. Has preference for Gln in the P1 position and Lys in the P2 position of oligopeptide substrates. Active also with His in the P1 position. Involved in resistance against insects partly by regulating expression of systemic wound response genes and possibly by its post-ingestive activity in the insect gut. Apart from the role in defense, may be involved in regulation of pectin methylesterases (PMEs) activity and pectin methylesterification of the cell wall. The protein is Subtilisin-like protease SBT3 of Solanum lycopersicum (Tomato).